The primary structure comprises 384 residues: FAD-dependent urate hydroxylase (384 aa).

Residues glycine 11, 30–31 (EA), serine 43, and valine 125 each bind FAD. Substrate is bound by residues asparagine 178, arginine 204, and 216 to 218 (YFF). FAD is bound by residues aspartate 285 and 295 to 299 (GQGGC).

Belongs to the FAD-dependent urate hydroxylase family. FAD serves as cofactor.

It carries out the reaction urate + NADH + O2 + H(+) = 5-hydroxyisourate + NAD(+) + H2O. Its pathway is purine metabolism; urate degradation. Its function is as follows. Catalyzes the hydroxylation of uric acid to 5-hydroxyisourate. The protein is FAD-dependent urate hydroxylase (hpxO) of Klebsiella oxytoca.